A 543-amino-acid polypeptide reads, in one-letter code: Cytochrome P450 2U1 (543 aa).

The next 4 membrane-spanning stretches (helical) occupy residues 32–52, 58–78, 261–281, and 342–362; these read PTGG…SWLW, GIPP…VLLP, VCLN…YLPF, and LFYI…NSLL. Cys-490 contacts heme. The chain crosses the membrane as a helical span at residues 495–515; it reads LAKMELFLMFVSLMQSFTFVL.

The protein belongs to the cytochrome P450 family. Heme is required as a cofactor.

It is found in the endoplasmic reticulum membrane. It localises to the microsome membrane. The protein resides in the mitochondrion inner membrane. The enzyme catalyses an omega-methyl-long-chain fatty acid + reduced [NADPH--hemoprotein reductase] + O2 = an omega-hydroxy-long-chain fatty acid + oxidized [NADPH--hemoprotein reductase] + H2O + H(+). The catalysed reaction is (5Z,8Z,11Z,14Z)-eicosatetraenoate + reduced [NADPH--hemoprotein reductase] + O2 = 19-hydroxy-(5Z,8Z,11Z,14Z)-eicosatetraenoate + oxidized [NADPH--hemoprotein reductase] + H2O + H(+). It catalyses the reaction (5Z,8Z,11Z,14Z)-eicosatetraenoate + reduced [NADPH--hemoprotein reductase] + O2 = 20-hydroxy-(5Z,8Z,11Z,14Z)-eicosatetraenoate + oxidized [NADPH--hemoprotein reductase] + H2O + H(+). It carries out the reaction N-[(5Z,8Z,11Z,14Z)-eicosatetraenoyl]-serotonin + reduced [NADPH--hemoprotein reductase] + O2 = 2-oxo-N-[(5Z,8Z,11Z,14Z)-eicosatetraenoyl]-serotonin + oxidized [NADPH--hemoprotein reductase] + H2O + H(+). A cytochrome P450 monooxygenase involved in the metabolism of arachidonic acid and its conjugates. Mechanistically, uses molecular oxygen inserting one oxygen atom into a substrate, and reducing the second into a water molecule, with two electrons provided by NADPH via cytochrome P450 reductase (CPR; NADPH-ferrihemoprotein reductase). Acts as an omega and omega-1 hydroxylase for arachidonic acid and possibly for other long chain fatty acids. May modulate the arachidonic acid signaling pathway and play a role in other fatty acid signaling processes. May down-regulate the biological activities of N-arachidonoyl-serotonin, an endocannabinoid that has anti-nociceptive effects through inhibition of fatty acid amide hydrolase FAAH, TRPV1 receptor and T-type calcium channels. Catalyzes C-2 oxidation of the indole ring of N-arachidonoyl-serotonin forming a less active product 2-oxo-N-arachidonoyl-serotonin. This Bos taurus (Bovine) protein is Cytochrome P450 2U1 (CYP2U1).